The chain runs to 58 residues: Small ribosomal subunit protein bS21 (58 aa).

Residues 28–58 form a disordered region; the sequence is VLQDIRKHEHYEKPSIKKKKKSEAARKKKRF. Residues 31-42 show a composition bias toward basic and acidic residues; the sequence is DIRKHEHYEKPS. The span at 43-58 shows a compositional bias: basic residues; the sequence is IKKKKKSEAARKKKRF.

The protein belongs to the bacterial ribosomal protein bS21 family.

The sequence is that of Small ribosomal subunit protein bS21 from Syntrophomonas wolfei subsp. wolfei (strain DSM 2245B / Goettingen).